Reading from the N-terminus, the 317-residue chain is Transaldolase (317 aa).

Catalysis depends on Lys-126, which acts as the Schiff-base intermediate with substrate.

This sequence belongs to the transaldolase family. Type 1 subfamily. In terms of assembly, homodimer.

It localises to the cytoplasm. It carries out the reaction D-sedoheptulose 7-phosphate + D-glyceraldehyde 3-phosphate = D-erythrose 4-phosphate + beta-D-fructose 6-phosphate. It participates in carbohydrate degradation; pentose phosphate pathway; D-glyceraldehyde 3-phosphate and beta-D-fructose 6-phosphate from D-ribose 5-phosphate and D-xylulose 5-phosphate (non-oxidative stage): step 2/3. Functionally, transaldolase is important for the balance of metabolites in the pentose-phosphate pathway. This Burkholderia cenocepacia (strain ATCC BAA-245 / DSM 16553 / LMG 16656 / NCTC 13227 / J2315 / CF5610) (Burkholderia cepacia (strain J2315)) protein is Transaldolase.